Consider the following 141-residue polypeptide: Hemoglobin subunit alpha (141 aa).

The region spanning 1–141 is the Globin domain; the sequence is VLSSTDKSNV…VSTVLTSKYR (141 aa). At S3 the chain carries Phosphoserine. 2 positions are modified to N6-succinyllysine: K7 and K11. K16 is modified (N6-acetyllysine; alternate). Position 16 is an N6-succinyllysine; alternate (K16). The residue at position 24 (Y24) is a Phosphotyrosine. Residue S35 is modified to Phosphoserine. N6-succinyllysine is present on K40. Residue H58 participates in O2 binding. H87 serves as a coordination point for heme b. S102 is subject to Phosphoserine. T108 bears the Phosphothreonine mark. Phosphoserine occurs at positions 124 and 131. 2 positions are modified to phosphothreonine: T134 and T137. Phosphoserine is present on S138.

Belongs to the globin family. Heterotetramer of two alpha chains and two beta chains. In terms of tissue distribution, red blood cells.

Its function is as follows. Involved in oxygen transport from the lung to the various peripheral tissues. Functionally, hemopressin acts as an antagonist peptide of the cannabinoid receptor CNR1. Hemopressin-binding efficiently blocks cannabinoid receptor CNR1 and subsequent signaling. This Pteropus alecto (Black flying fox) protein is Hemoglobin subunit alpha (HBA).